Reading from the N-terminus, the 343-residue chain is Protein RecA (343 aa).

Position 65 to 72 (65 to 72 (GPESSGKT)) interacts with ATP.

This sequence belongs to the RecA family.

The protein localises to the cytoplasm. In terms of biological role, can catalyze the hydrolysis of ATP in the presence of single-stranded DNA, the ATP-dependent uptake of single-stranded DNA by duplex DNA, and the ATP-dependent hybridization of homologous single-stranded DNAs. It interacts with LexA causing its activation and leading to its autocatalytic cleavage. This Xanthomonas campestris pv. campestris (strain 8004) protein is Protein RecA.